The following is an 815-amino-acid chain: Leucine--tRNA ligase (815 aa).

Positions 40 to 50 (PYPSGRIHMGH) match the 'HIGH' region motif. Positions 583 to 587 (KMSKS) match the 'KMSKS' region motif. An ATP-binding site is contributed by Lys-586.

This sequence belongs to the class-I aminoacyl-tRNA synthetase family.

Its subcellular location is the cytoplasm. It carries out the reaction tRNA(Leu) + L-leucine + ATP = L-leucyl-tRNA(Leu) + AMP + diphosphate. In Nitratiruptor sp. (strain SB155-2), this protein is Leucine--tRNA ligase.